The chain runs to 186 residues: Ribosome-recycling factor (186 aa).

The protein belongs to the RRF family.

The protein resides in the cytoplasm. Functionally, responsible for the release of ribosomes from messenger RNA at the termination of protein biosynthesis. May increase the efficiency of translation by recycling ribosomes from one round of translation to another. This Nitratidesulfovibrio vulgaris (strain DP4) (Desulfovibrio vulgaris) protein is Ribosome-recycling factor.